The following is a 657-amino-acid chain: Transmembrane protein 232 (657 aa).

Helical transmembrane passes span 168 to 188 (IGYL…LESF) and 353 to 373 (WAWN…LYAA).

It is found in the membrane. Plays a critical role for male fertility and sperm motility by regulating sperm cytoplasm removal and maintaining axoneme integrity. The polypeptide is Transmembrane protein 232 (TMEM232) (Homo sapiens (Human)).